Reading from the N-terminus, the 605-residue chain is Elongation factor 4 (605 aa).

The region spanning 11–193 is the tr-type G domain; it reads KNIRNFSIIA…RLVDVIPAPE (183 aa). Residues 23–28 and 140–143 contribute to the GTP site; these read DHGKST and NKID.

This sequence belongs to the TRAFAC class translation factor GTPase superfamily. Classic translation factor GTPase family. LepA subfamily.

Its subcellular location is the cell inner membrane. It carries out the reaction GTP + H2O = GDP + phosphate + H(+). Functionally, required for accurate and efficient protein synthesis under certain stress conditions. May act as a fidelity factor of the translation reaction, by catalyzing a one-codon backward translocation of tRNAs on improperly translocated ribosomes. Back-translocation proceeds from a post-translocation (POST) complex to a pre-translocation (PRE) complex, thus giving elongation factor G a second chance to translocate the tRNAs correctly. Binds to ribosomes in a GTP-dependent manner. The chain is Elongation factor 4 from Acinetobacter baylyi (strain ATCC 33305 / BD413 / ADP1).